Reading from the N-terminus, the 170-residue chain is Regulator of ribonuclease activity A (170 aa).

It belongs to the RraA family. Homotrimer. Binds to both RNA-binding sites in the C-terminal region of Rne and to RhlB.

It localises to the cytoplasm. In terms of biological role, globally modulates RNA abundance by binding to RNase E (Rne) and regulating its endonucleolytic activity. Can modulate Rne action in a substrate-dependent manner by altering the composition of the degradosome. Modulates RNA-binding and helicase activities of the degradosome. This Psychromonas ingrahamii (strain DSM 17664 / CCUG 51855 / 37) protein is Regulator of ribonuclease activity A.